A 177-amino-acid polypeptide reads, in one-letter code: RNA polymerase sigma-E factor (177 aa).

Positions 34–47 match the Polymerase core binding motif; that stretch reads DLLQTALARTYGRW. The segment at residues 128–147 is a DNA-binding region (H-T-H motif); that stretch reads TEETAAALGMSAGTVKSTLH.

It belongs to the sigma-70 factor family. ECF subfamily.

The protein resides in the cytoplasm. Its function is as follows. Sigma factors are initiation factors that promote the attachment of RNA polymerase to specific initiation sites and are then released. This sigma factor is required for normal cell wall integrity; it is recruited by RNA polymerase to transcribe genes with cell wall-related functions. It is also involved in the transcription of the dagA gene coding for an extracellular agar-degrading enzyme. This Streptomyces coelicolor (strain ATCC BAA-471 / A3(2) / M145) protein is RNA polymerase sigma-E factor (sigE).